The chain runs to 191 residues: Superoxide dismutase [Mn/Fe] (191 aa).

Fe(3+) is bound by residues His-27, His-74, Asp-157, and His-161. Mn(2+) is bound by residues His-27, His-74, Asp-157, and His-161.

It belongs to the iron/manganese superoxide dismutase family. In terms of assembly, homodimer. Requires Mn(2+) as cofactor. It depends on Fe(3+) as a cofactor.

It catalyses the reaction 2 superoxide + 2 H(+) = H2O2 + O2. With respect to regulation, inhibited by hydrogen peroxide. Destroys superoxide anion radicals which are normally produced within the cells and which are toxic to biological systems. Catalyzes the dismutation of superoxide anion radicals into O2 and H2O2 by successive reduction and oxidation of the transition metal ion at the active site. This Porphyromonas gingivalis (strain ATCC BAA-308 / W83) protein is Superoxide dismutase [Mn/Fe] (sodB).